A 185-amino-acid chain; its full sequence is Homeobox expressed in ES cells 1 (185 aa).

The tract at residues K32–T69 is disordered. A DNA-binding region (homeobox) is located at residues G108 to R167.

Belongs to the ANF homeobox family. Can form heterodimers with PROP1 in binding to DNA Interacts with TLE1. High levels found in the embryonic liver, lower level expression seen in the viscera, amnion and yolk sac.

It is found in the nucleus. In terms of biological role, required for the normal development of the forebrain, eyes and other anterior structures such as the olfactory placodes and pituitary gland. Possible transcriptional repressor. Binds to the palindromic PIII sequence, 5'-AGCTTGAGTCTAATTGAATTAACTGTAC-3'. HESX1 and PROP1 bind as heterodimers on this palindromic site, and, in vitro, HESX1 can antagonize PROP1 activation. This is Homeobox expressed in ES cells 1 (Hesx1) from Mus musculus (Mouse).